The chain runs to 148 residues: 3-dehydroquinate dehydratase (148 aa).

Residue Tyr-23 is the Proton acceptor of the active site. Asn-75, His-81, and Asp-88 together coordinate substrate. Catalysis depends on His-101, which acts as the Proton donor. Substrate-binding positions include 102–103 and Arg-112; that span reads LS.

This sequence belongs to the type-II 3-dehydroquinase family. As to quaternary structure, homododecamer.

It carries out the reaction 3-dehydroquinate = 3-dehydroshikimate + H2O. Its pathway is metabolic intermediate biosynthesis; chorismate biosynthesis; chorismate from D-erythrose 4-phosphate and phosphoenolpyruvate: step 3/7. In terms of biological role, catalyzes a trans-dehydration via an enolate intermediate. The sequence is that of 3-dehydroquinate dehydratase from Xanthomonas campestris pv. campestris (strain B100).